The primary structure comprises 386 residues: Zinc transporter 7-A (386 aa).

Over 1–37 (MLPLSIKDDEYKPPKFNLARKVSGWIRSIFSDSTSRN) the chain is Cytoplasmic. The chain crosses the membrane as a helical span at residues 38 to 58 (LFCFLCLNLSFAFVELFYGIW). Residues 59–67 (SNSLGLISD) are Lumenal-facing. The helical transmembrane segment at 68–88 (SFHMFFDCTALLAGLAASVIS) threads the bilayer. The Cytoplasmic segment spans residues 89–102 (RWKTNEAFSYGYVR). A helical transmembrane segment spans residues 103 to 123 (AEVLAGFVNGLFLIFTAFFIF). Residues 124–140 (SEGVERALDTPEVHHER) are Lumenal-facing. Residues 141–161 (LLPVSIMGLLVNIIGIFVFQH) traverse the membrane as a helical segment. The segment at 161-222 (HGGGHGHSHE…GHSHDHSPKH (62 aa)) is his-rich loop. Residues 162-246 (GGGHGHSHES…KGSSKQILEG (85 aa)) lie on the Cytoplasmic side of the membrane. The interval 167–239 (HSHESGHGHS…DEPPEEHKGS (73 aa)) is disordered. Over residues 228–238 (CHDEPPEEHKG) the composition is skewed to basic and acidic residues. Residues 247–267 (VFLHIVADTLGSVGVIFSTIL) traverse the membrane as a helical segment. The Lumenal segment spans residues 268–272 (MQRYG). A helical transmembrane segment spans residues 273 to 293 (LMIADPICSMLIALLIFVSVI). Over 294-386 (PLLKQSIGIL…LYVQIDFAAI (93 aa)) the chain is Cytoplasmic.

This sequence belongs to the cation diffusion facilitator (CDF) transporter (TC 2.A.4) family. SLC30A subfamily. Homooligomer.

It is found in the golgi apparatus membrane. It localises to the cytoplasmic vesicle. The protein resides in the golgi apparatus. The protein localises to the trans-Golgi network. Its subcellular location is the sarcoplasmic reticulum. It is found in the mitochondrion. It carries out the reaction Zn(2+)(in) = Zn(2+)(out). In terms of biological role, zinc ion transporter mediating zinc entry from the cytosol into the lumen of organelles along the secretory pathway. By contributing to zinc ion homeostasis within the early secretory pathway, regulates the activation and folding of enzymes like alkaline phosphatases. The chain is Zinc transporter 7-A (slc30a7-a) from Xenopus laevis (African clawed frog).